A 364-amino-acid polypeptide reads, in one-letter code: Methylthioribose-1-phosphate isomerase (364 aa).

Residues 46 to 48 (RGA), R89, and Q196 contribute to the substrate site. The Proton donor role is filled by D237. 247–248 (NK) provides a ligand contact to substrate.

It belongs to the eIF-2B alpha/beta/delta subunits family. MtnA subfamily.

The catalysed reaction is 5-(methylsulfanyl)-alpha-D-ribose 1-phosphate = 5-(methylsulfanyl)-D-ribulose 1-phosphate. The protein operates within amino-acid biosynthesis; L-methionine biosynthesis via salvage pathway; L-methionine from S-methyl-5-thio-alpha-D-ribose 1-phosphate: step 1/6. Its function is as follows. Catalyzes the interconversion of methylthioribose-1-phosphate (MTR-1-P) into methylthioribulose-1-phosphate (MTRu-1-P). The polypeptide is Methylthioribose-1-phosphate isomerase (Pelotomaculum thermopropionicum (strain DSM 13744 / JCM 10971 / SI)).